We begin with the raw amino-acid sequence, 350 residues long: Protein YIPF3 (350 aa).

The span at 1 to 10 shows a compositional bias: low complexity; the sequence is MATTAAPAGG. The segment at 1–51 is disordered; sequence MATTAAPAGGARNGAGPEWGGFEENIQGGGSAVIDMENMDDTSGSSFEDMG. An N-acetylalanine modification is found at Ala-2. At 2–148 the chain is on the cytoplasmic side; that stretch reads ATTAAPAGGA…PIKMVNFPQK (147 aa). Residues 149-169 traverse the membrane as a helical segment; it reads IAGELYGPLMLVFTLVAILLH. Over 170-187 the chain is Lumenal; it reads GMKTSDTIIREGTLMGTA. A helical transmembrane segment spans residues 188-208; that stretch reads IGTCFGYWLGVSSFIYFLAYL. Over 209 to 214 the chain is Cytoplasmic; it reads CNAQIT. The chain crosses the membrane as a helical span at residues 215 to 237; it reads MLQMLALLGYGLFGHCIVLFITY. Residues 238–240 lie on the Lumenal side of the membrane; the sequence is NIH. The chain crosses the membrane as a helical span at residues 241–263; sequence LHALFYLFWLLVGGLSTLRMVAV. At 264-274 the chain is on the cytoplasmic side; the sequence is LVSRTVGPTQR. The chain crosses the membrane as a helical span at residues 275–295; it reads LLLCGTLAALHMLFLLYLHFA. Residues 296–350 lie on the Lumenal side of the membrane; it reads YHKVVEGILDTLEGPNIPPIQRVPRDIPAMLPAARLPTTVLNATAKAVAVTLQSH. Thr-333 and Thr-334 each carry an O-linked (GalNAc...) threonine glycan. A glycan (N-linked (GlcNAc...) asparagine) is linked at Asn-337. 2 O-linked (GalNAc...) threonine glycosylation sites follow: Thr-339 and Thr-346.

Belongs to the YIP1 family. As to quaternary structure, interacts with YIPF4 and YIPF5. Post-translationally, N-glycosylated in the ER (40 kDa form I), then O-glycosylated in the Golgi apparatus (46 kDa form II), the C-terminal lumenal region is later removed in the Golgi apparatus to produce a 36 kDa form III. O-glycosylated with core 1-like and core 2-like glycans. O-glycan heterogeneity at Thr-346: HexNAc (minor), HexHexNAc (major), Hex1HexNAc2 (minor), Hex2HexNAc2 (minor) and dHex1Hex2HexNAc2 (minor). In terms of tissue distribution, expressed by nucleated hematopoietic cells (at protein level).

It localises to the cell membrane. It is found in the cytoplasm. The protein localises to the golgi apparatus. Its subcellular location is the cis-Golgi network membrane. Its function is as follows. Involved in the maintenance of the Golgi structure. May play a role in hematopoiesis. In Homo sapiens (Human), this protein is Protein YIPF3 (YIPF3).